Reading from the N-terminus, the 777-residue chain is Polyribonucleotide nucleotidyltransferase (777 aa).

Positions 494 and 500 each coordinate Mg(2+). A KH domain is found at 561–620 (PRIITLQIDPSKIGALIGPGGKTIRSIIEQTGAQIDVEDDGRVFVTTPDADGARMAQSLI). The S1 motif domain occupies 630–699 (GEIFTGKVVR…GTGKLSLSRR (70 aa)). The interval 703-777 (TGETAEQRKS…NDRRGGGFRG (75 aa)) is disordered. Gly residues predominate over residues 718–727 (GPRGGGGGGD). Composition is skewed to basic and acidic residues over residues 728–761 (RGPR…DRGP) and 768–777 (NDRRGGGFRG).

The protein belongs to the polyribonucleotide nucleotidyltransferase family. It depends on Mg(2+) as a cofactor.

The protein localises to the cytoplasm. It carries out the reaction RNA(n+1) + phosphate = RNA(n) + a ribonucleoside 5'-diphosphate. Its function is as follows. Involved in mRNA degradation. Catalyzes the phosphorolysis of single-stranded polyribonucleotides processively in the 3'- to 5'-direction. This Herpetosiphon aurantiacus (strain ATCC 23779 / DSM 785 / 114-95) protein is Polyribonucleotide nucleotidyltransferase.